The sequence spans 511 residues: Cytochrome P450 4A7 (511 aa).

A propeptide spanning residues methionine 1 to serine 4 is cleaved from the precursor. Heme contacts are provided by glutamate 322 and cysteine 458.

It belongs to the cytochrome P450 family. The cofactor is heme. In terms of tissue distribution, liver, kidney, small intestine.

The protein localises to the endoplasmic reticulum membrane. Its subcellular location is the microsome membrane. The catalysed reaction is an omega-methyl-long-chain fatty acid + reduced [NADPH--hemoprotein reductase] + O2 = an omega-hydroxy-long-chain fatty acid + oxidized [NADPH--hemoprotein reductase] + H2O + H(+). Functionally, cytochromes P450 are a group of heme-thiolate monooxygenases. In liver microsomes, this enzyme is involved in an NADPH-dependent electron transport pathway. It oxidizes a variety of structurally unrelated compounds, including steroids, fatty acids, and xenobiotics. The kidney P-450 system is rather specialized for the omega-hydroxylation of fatty acids. Both P450-KA1 and P450-KA2 catalyze the omega- and (omega-1)-hydroxylation of various fatty acids with no drug-metabolizing activity, and hydroxylate prostaglandin A1 and A2 solely at the omega-position. This chain is Cytochrome P450 4A7 (CYP4A7), found in Oryctolagus cuniculus (Rabbit).